The chain runs to 494 residues: MAKDKASRRPRAETPKGFRDYFGADVTERKAMLDAVAEVYHRYGFDPLETSAVETVEALGKFLPDVDRPNEGVFGWQDEDGDWLALRYDLTAPLARVAAQFRNDLPSPYRRYAMGPVWRNEKPGPGRFRQFYQCDADTVGSASVAADAEICAMLSDALEVVGIPRGDYIVRVNNRKVLNGVMEVAGVLDPSDPAKFEAERGIVLRAIDKIDRLGETGVRALLGSGRKDESGDFTKGAGLSDEQAEVVMGFMAARRDTGAATAARLRELVGASTLGCEGVQELETIAELLDVQGYGPDRIVVDPSVVRGLGYYTGPVFEAELTFEILDEKGRKRQFGSVAGGGRYDDLVKRFTGQSVPATGVSIGVDRLLAALRAKGRAGAEAQGPVVVTVMDRDRMGDYMAMVGELRRAGLRAELYLGNPKNFGNQLKYADARKSPVAVIQGSDEAARGVVVLKDLVLGAQIAAGASLEEWKSRPAQVEVPRADLVRAVQDMLS.

This sequence belongs to the class-II aminoacyl-tRNA synthetase family. In terms of assembly, homodimer.

Its subcellular location is the cytoplasm. It catalyses the reaction tRNA(His) + L-histidine + ATP = L-histidyl-tRNA(His) + AMP + diphosphate + H(+). The sequence is that of Histidine--tRNA ligase from Cereibacter sphaeroides (strain ATCC 17023 / DSM 158 / JCM 6121 / CCUG 31486 / LMG 2827 / NBRC 12203 / NCIMB 8253 / ATH 2.4.1.) (Rhodobacter sphaeroides).